Consider the following 328-residue polypeptide: Gonadotropin-releasing hormone receptor (328 aa).

Residues 1-38 are Extracellular-facing; sequence MANSASPEQNQNHCSAINSSILLTQGNLPTLTLSGKIR. N18 carries an N-linked (GlcNAc...) asparagine glycan. The chain crosses the membrane as a helical span at residues 39–58; sequence VTVTFFLFLLSTAFNASFLL. Topologically, residues 59-77 are cytoplasmic; that stretch reads KLQKWTQRKEKGKKLSRMK. The chain crosses the membrane as a helical span at residues 78–97; the sequence is VLLKHLTLANLLETLIVMPL. At 98-115 the chain is on the extracellular side; the sequence is DGMWNITVQWYAGEFLCK. N-linked (GlcNAc...) asparagine glycosylation is present at N102. Cysteines 114 and 196 form a disulfide. A helical membrane pass occupies residues 116–137; it reads VLSYLKLFSMYAPAFMMVVISL. Over 138–164 the chain is Cytoplasmic; it reads DRSLAITRPLAVKSNSRLGRFMIGLAW. The helical transmembrane segment at 165–184 threads the bilayer; sequence LLSSIFAGPQLYIFRMIHLA. Topologically, residues 185-212 are extracellular; it reads DSSGQTEGFSQCVTHGSFPQWWHQAFYN. Residues 213–232 traverse the membrane as a helical segment; the sequence is FFTFSCLFIIPLLIMLICNA. Over 233–281 the chain is Cytoplasmic; sequence KIMFTLTRVLQQDPHNLQLNQSKNNIPRARLRTLKMTVAFAASFIVCWT. Residues 282 to 300 traverse the membrane as a helical segment; sequence PYYVLGIWYWFDPEMVNRV. At 301–306 the chain is on the extracellular side; it reads SDPVNH. Residues 307–326 form a helical membrane-spanning segment; the sequence is FFFLFAFLNPCFDPLIYGYF. Topologically, residues 327-328 are cytoplasmic; that stretch reads SL.

This sequence belongs to the G-protein coupled receptor 1 family. In terms of tissue distribution, pituitary gland.

It localises to the cell membrane. In terms of biological role, receptor for gonadotropin releasing hormone (GnRH) that mediates the action of GnRH to stimulate the secretion of the gonadotropic hormones luteinizing hormone (LH) and follicle-stimulating hormone (FSH). This receptor mediates its action by association with G-proteins that activate a phosphatidylinositol-calcium second messenger system. The chain is Gonadotropin-releasing hormone receptor (GNRHR) from Sus scrofa (Pig).